The sequence spans 60 residues: Potassium channel toxin Tst-beta-KTx (60 aa).

Residues 26-60 (QFGCPAYEGYCNDHCNDIERKDGECHGFKCKCAKD) form the BetaSPN-type CS-alpha/beta domain. Intrachain disulfides connect Cys-29-Cys-50, Cys-36-Cys-55, and Cys-40-Cys-57.

This sequence belongs to the long chain scorpion toxin family. Class 1 subfamily. As to expression, expressed by the venom gland.

The protein resides in the secreted. Inhibits voltage-gated potassium channels Kv1.1/KCNA1, Kv1.2/KCNA2, and Kv1.3/KCNA3. In terms of biological role, does not induce hemolytic activity, lactate dehydrogenase (LDH) release from mast cells, mast cell degranulation, and antimicrobial effects. In vivo, injection into mice causes moderate edema formation, but induces very weak or no change in nociceptive sensibility. It also reduces mice locomotion, suggesting an increase in anxiety, but causes no alteration in rearing (standing on hind limbs). The chain is Potassium channel toxin Tst-beta-KTx from Tityus stigmurus (Brazilian scorpion).